The primary structure comprises 498 residues: Glycerol kinase (498 aa).

Position 12 (T12) interacts with ADP. ATP-binding residues include T12, T13, and S14. T12 provides a ligand contact to sn-glycerol 3-phosphate. ADP is bound at residue R16. Sn-glycerol 3-phosphate-binding residues include R82, E83, and Y134. 3 residues coordinate glycerol: R82, E83, and Y134. At H230 the chain carries Phosphohistidine; by HPr. Residue D244 coordinates sn-glycerol 3-phosphate. Glycerol-binding residues include D244 and Q245. ADP is bound by residues T266 and G309. 4 residues coordinate ATP: T266, G309, Q313, and G410. 2 residues coordinate ADP: G410 and N414.

This sequence belongs to the FGGY kinase family. Homotetramer and homodimer (in equilibrium). Post-translationally, the phosphoenolpyruvate-dependent sugar phosphotransferase system (PTS), including enzyme I, and histidine-containing protein (HPr) are required for the phosphorylation, which leads to the activation of the enzyme.

It catalyses the reaction glycerol + ATP = sn-glycerol 3-phosphate + ADP + H(+). Its pathway is polyol metabolism; glycerol degradation via glycerol kinase pathway; sn-glycerol 3-phosphate from glycerol: step 1/1. With respect to regulation, activated by phosphorylation and inhibited by fructose 1,6-bisphosphate (FBP). Functionally, key enzyme in the regulation of glycerol uptake and metabolism. Catalyzes the phosphorylation of glycerol to yield sn-glycerol 3-phosphate. The polypeptide is Glycerol kinase (Staphylococcus aureus (strain MSSA476)).